Reading from the N-terminus, the 203-residue chain is High frequency lysogenization protein HflD homolog (203 aa).

This sequence belongs to the HflD family.

Its subcellular location is the cytoplasm. It is found in the cell inner membrane. The polypeptide is High frequency lysogenization protein HflD homolog (Pasteurella multocida (strain Pm70)).